We begin with the raw amino-acid sequence, 151 residues long: Putative pre-16S rRNA nuclease (151 aa).

It belongs to the YqgF nuclease family.

The protein resides in the cytoplasm. Could be a nuclease involved in processing of the 5'-end of pre-16S rRNA. The chain is Putative pre-16S rRNA nuclease from Neisseria meningitidis serogroup B (strain ATCC BAA-335 / MC58).